The primary structure comprises 817 residues: DNA-directed RNA polymerase subunit beta'' (817 aa).

Zn(2+)-binding residues include C219, C291, C298, and C301.

The protein belongs to the RNA polymerase beta' chain family. RpoC2 subfamily. As to quaternary structure, in plastids the minimal PEP RNA polymerase catalytic core is composed of four subunits: alpha, beta, beta', and beta''. When a (nuclear-encoded) sigma factor is associated with the core the holoenzyme is formed, which can initiate transcription. Requires Zn(2+) as cofactor.

It localises to the plastid. The catalysed reaction is RNA(n) + a ribonucleoside 5'-triphosphate = RNA(n+1) + diphosphate. Its function is as follows. DNA-dependent RNA polymerase catalyzes the transcription of DNA into RNA using the four ribonucleoside triphosphates as substrates. This chain is DNA-directed RNA polymerase subunit beta'' (rpoC2), found in Euglena longa (Euglenophycean alga).